Here is a 450-residue protein sequence, read N- to C-terminus: UDP-N-acetylmuramoylalanine--D-glutamate ligase (450 aa).

119-125 serves as a coordination point for ATP; that stretch reads GSNGKTT.

It belongs to the MurCDEF family.

It localises to the cytoplasm. It catalyses the reaction UDP-N-acetyl-alpha-D-muramoyl-L-alanine + D-glutamate + ATP = UDP-N-acetyl-alpha-D-muramoyl-L-alanyl-D-glutamate + ADP + phosphate + H(+). The protein operates within cell wall biogenesis; peptidoglycan biosynthesis. Functionally, cell wall formation. Catalyzes the addition of glutamate to the nucleotide precursor UDP-N-acetylmuramoyl-L-alanine (UMA). The chain is UDP-N-acetylmuramoylalanine--D-glutamate ligase from Streptococcus pneumoniae (strain ATCC BAA-255 / R6).